Here is an 89-residue protein sequence, read N- to C-terminus: Small ribosomal subunit protein uS15 (89 aa).

Belongs to the universal ribosomal protein uS15 family. As to quaternary structure, part of the 30S ribosomal subunit. Forms a bridge to the 50S subunit in the 70S ribosome, contacting the 23S rRNA.

In terms of biological role, one of the primary rRNA binding proteins, it binds directly to 16S rRNA where it helps nucleate assembly of the platform of the 30S subunit by binding and bridging several RNA helices of the 16S rRNA. Its function is as follows. Forms an intersubunit bridge (bridge B4) with the 23S rRNA of the 50S subunit in the ribosome. The chain is Small ribosomal subunit protein uS15 from Heliobacterium modesticaldum (strain ATCC 51547 / Ice1).